Here is a 248-residue protein sequence, read N- to C-terminus: 3-deoxy-manno-octulosonate cytidylyltransferase (248 aa).

This sequence belongs to the KdsB family.

It localises to the cytoplasm. The enzyme catalyses 3-deoxy-alpha-D-manno-oct-2-ulosonate + CTP = CMP-3-deoxy-beta-D-manno-octulosonate + diphosphate. Its pathway is nucleotide-sugar biosynthesis; CMP-3-deoxy-D-manno-octulosonate biosynthesis; CMP-3-deoxy-D-manno-octulosonate from 3-deoxy-D-manno-octulosonate and CTP: step 1/1. It participates in bacterial outer membrane biogenesis; lipopolysaccharide biosynthesis. In terms of biological role, activates KDO (a required 8-carbon sugar) for incorporation into bacterial lipopolysaccharide in Gram-negative bacteria. This chain is 3-deoxy-manno-octulosonate cytidylyltransferase, found in Escherichia coli O6:H1 (strain CFT073 / ATCC 700928 / UPEC).